Consider the following 96-residue polypeptide: Cysteine proteinase (96 aa).

An intrachain disulfide couples C25 to C79. Active-site residues include H31 and N58.

This sequence belongs to the peptidase C1 family.

In Carica papaya (Papaya), this protein is Cysteine proteinase.